Reading from the N-terminus, the 616-residue chain is Proline--tRNA ligase (616 aa).

Belongs to the class-II aminoacyl-tRNA synthetase family. ProS type 1 subfamily. As to quaternary structure, homodimer.

Its subcellular location is the cytoplasm. The enzyme catalyses tRNA(Pro) + L-proline + ATP = L-prolyl-tRNA(Pro) + AMP + diphosphate. In terms of biological role, catalyzes the attachment of proline to tRNA(Pro) in a two-step reaction: proline is first activated by ATP to form Pro-AMP and then transferred to the acceptor end of tRNA(Pro). As ProRS can inadvertently accommodate and process non-cognate amino acids such as alanine and cysteine, to avoid such errors it has two additional distinct editing activities against alanine. One activity is designated as 'pretransfer' editing and involves the tRNA(Pro)-independent hydrolysis of activated Ala-AMP. The other activity is designated 'posttransfer' editing and involves deacylation of mischarged Ala-tRNA(Pro). The misacylated Cys-tRNA(Pro) is not edited by ProRS. This chain is Proline--tRNA ligase, found in Lactococcus lactis subsp. lactis (strain IL1403) (Streptococcus lactis).